A 476-amino-acid chain; its full sequence is tRNA sulfurtransferase (476 aa).

The THUMP domain maps to 54 to 156; sequence AENDIPLSKV…GKDALIYDKI (103 aa). ATP is bound by residues 174-175, Lys-256, Gly-278, and Gln-287; that span reads MV. Cys-334 and Cys-433 are joined by a disulfide. One can recognise a Rhodanese domain in the interval 388–470; the sequence is NLEDAVFIDL…LSKQKGSVDE (83 aa). Cys-433 acts as the Cysteine persulfide intermediate in catalysis.

The protein belongs to the ThiI family.

It is found in the cytoplasm. It carries out the reaction [ThiI sulfur-carrier protein]-S-sulfanyl-L-cysteine + a uridine in tRNA + 2 reduced [2Fe-2S]-[ferredoxin] + ATP + H(+) = [ThiI sulfur-carrier protein]-L-cysteine + a 4-thiouridine in tRNA + 2 oxidized [2Fe-2S]-[ferredoxin] + AMP + diphosphate. It catalyses the reaction [ThiS sulfur-carrier protein]-C-terminal Gly-Gly-AMP + S-sulfanyl-L-cysteinyl-[cysteine desulfurase] + AH2 = [ThiS sulfur-carrier protein]-C-terminal-Gly-aminoethanethioate + L-cysteinyl-[cysteine desulfurase] + A + AMP + 2 H(+). Its pathway is cofactor biosynthesis; thiamine diphosphate biosynthesis. Its function is as follows. Catalyzes the ATP-dependent transfer of a sulfur to tRNA to produce 4-thiouridine in position 8 of tRNAs, which functions as a near-UV photosensor. Also catalyzes the transfer of sulfur to the sulfur carrier protein ThiS, forming ThiS-thiocarboxylate. This is a step in the synthesis of thiazole, in the thiamine biosynthesis pathway. The sulfur is donated as persulfide by IscS. This is tRNA sulfurtransferase from Thermoplasma volcanium (strain ATCC 51530 / DSM 4299 / JCM 9571 / NBRC 15438 / GSS1).